Consider the following 852-residue polypeptide: Probable inorganic carbon transporter subunit DabA (852 aa).

The Zn(2+) site is built by Cys370, Asp372, His554, and Cys569.

This sequence belongs to the inorganic carbon transporter (TC 9.A.2) DabA family. As to quaternary structure, forms a complex with DabB. It depends on Zn(2+) as a cofactor.

It localises to the cell inner membrane. Functionally, part of an energy-coupled inorganic carbon pump. This chain is Probable inorganic carbon transporter subunit DabA, found in Novosphingobium aromaticivorans (strain ATCC 700278 / DSM 12444 / CCUG 56034 / CIP 105152 / NBRC 16084 / F199).